The primary structure comprises 1464 residues: Collagen alpha-1(I) chain (1464 aa).

Positions 1 to 22 are cleaved as a signal peptide; the sequence is MFSFVDLRLLLLLAATALLTHG. Residues 23–161 constitute a propeptide, N-terminal propeptide; sequence QEEGQVEGQD…PPGLGGNFAP (139 aa). Residues 38–96 form the VWFC domain; it reads ITCVQNGLRYHDRDVWKPEPCRICVCDNGKVLCDDVICDETKNCPGAEVPEGECCPVCP. Residues 98 to 1214 are disordered; the sequence is GSESPTDQET…PQEKAHDGGR (1117 aa). The segment covering 138 to 153 has biased composition (pro residues); that stretch reads PGLPGPPGPPGPPGPP. Residue Q162 is modified to Pyrrolidone carboxylic acid. Residues 162 to 178 are nonhelical region (N-terminal); it reads QLSYGYDEKSTGGISVP. An Allysine modification is found at K170. Residue S171 is modified to Phosphoserine. The triple-helical region stretch occupies residues 179-1192; it reads GPMGPSGPRG…PGPPGPPGPP (1014 aa). 4-hydroxyproline is present on residues P190, P193, P196, P205, P208, P211, P226, P241, P247, P256, and P262. A compositionally biased stretch (low complexity) spans 198–217; sequence PQGFQGPPGEPGEPGASGPM. Residues 229-243 are compositionally biased toward basic and acidic residues; the sequence is NGDDGEAGKPGRPGE. The residue at position 265 (K265) is a 5-hydroxylysine; alternate. O-linked (Gal...) hydroxylysine; alternate glycosylation occurs at K265. S271 is modified (phosphoserine). Low complexity predominate over residues 279–295; that stretch reads DAGPAGPKGEPGSPGEN. 4-hydroxyproline is present on residues P289, P292, P298, P307, and P313. Positions 318–331 are enriched in low complexity; the sequence is PAGARGNDGATGAA. Positions 333-345 are enriched in pro residues; sequence PPGPTGPAGPPGF. 11 positions are modified to 4-hydroxyproline: P334, P343, P346, P373, P376, P388, P394, P403, P409, P412, and P427. The span at 379 to 418 shows a compositional bias: low complexity; it reads AGAAGPAGNPGADGQPGAKGANGAPGIAGAPGFPGARGPS. At K430 the chain carries 5-hydroxylysine. Residues P436, P439, P451, P460, P475, P481, P490, and P496 each carry the 4-hydroxyproline modification. A compositionally biased stretch (low complexity) spans 448-457; sequence KGEPGPVGVQ. A compositionally biased stretch (gly residues) spans 485–494; that stretch reads GERGGPGSRG. 5-hydroxylysine is present on K505. 4-hydroxyproline is present on residues P514, P523, P529, P535, P544, P547, P556, P565, P571, P583, P592, P601, P604, P622, P640, P646, P652, P658, P664, P670, P682, P691, P703, P715, P718, P724, P730, and P739. Positions 538 to 564 are enriched in low complexity; the sequence is KGLTGSPGSPGPDGKTGPPGPAGQDGR. Positions 573-592 are enriched in low complexity; that stretch reads ARGQAGVMGFPGPKGAAGEP. Residues 634-661 are compositionally biased toward low complexity; the sequence is QGPAGSPGFQGLPGPAGPPGEAGKPGEQ. The span at 696 to 724 shows a compositional bias: low complexity; that stretch reads PRGANGAPGNDGAKGDAGAPGAPGSQGAP. A Cell attachment site motif is present at residues 745–747; the sequence is RGD. The residue at position 751 (K751) is a 5-hydroxylysine. 3 positions are modified to 4-hydroxyproline: P757, P772, and P778. Residues 784 to 798 are compositionally biased toward low complexity; that stretch reads SGPSGPAGPTGARGA. S787 bears the Phosphoserine mark. P799, P805, P808, P817, P823, P841, P850, and P859 each carry 4-hydroxyproline. The span at 811–838 shows a compositional bias: low complexity; sequence AGFAGPPGADGQPGAKGEPGDAGAKGDA. Positions 840–852 are enriched in pro residues; that stretch reads PPGPAGPAGPPGP. Positions 853-883 are enriched in low complexity; sequence IGNVGAPGAKGARGSAGPPGATGFPGAAGRV. K862 is subject to 5-hydroxylysine. 4-hydroxyproline is present on residues P871 and P877. P885 carries the 3-hydroxyproline modification. 4-hydroxyproline is present on residues P886, P895, P898, P919, P928, P937, P946, P964, P973, P976, P982, P997, P1003, P1009, P1018, and P1024. Over residues 912 to 921 the composition is skewed to low complexity; that stretch reads ETGPAGRPGE. The span at 931 to 955 shows a compositional bias: low complexity; that stretch reads AGEKGSPGADGPAGAPGTPGPQGIA. The span at 996–1006 shows a compositional bias: pro residues; the sequence is PPGPMGPPGLA. 5-hydroxylysine is present on K1033. Positions 1042–1057 are enriched in pro residues; it reads AGPPGAPGAPGAPGPV. A 4-hydroxyproline mark is found at P1045, P1048, and P1051. Low complexity predominate over residues 1078–1092; that stretch reads VGPVGARGPAGPQGP. The Cell attachment site signature appears at 1093 to 1095; it reads RGD. Over residues 1093 to 1107 the composition is skewed to basic and acidic residues; sequence RGDKGETGEQGDRGI. A 5-hydroxylysine modification is found at K1096. At K1108 the chain carries 5-hydroxylysine; alternate. K1108 carries an O-linked (Gal...) hydroxylysine; alternate glycan. P1120, P1123, P1126, P1144, and P1159 each carry 4-hydroxyproline. The segment covering 1126-1159 has biased composition (low complexity); the sequence is PGEQGPSGASGPAGPRGPPGSAGAPGKDGLNGLP. 3-hydroxyproline is present on P1164. P1165 is modified (4-hydroxyproline). A compositionally biased stretch (pro residues) spans 1177–1192; the sequence is VGPPGPPGPPGPPGPP. At P1179 the chain carries 3-hydroxyproline. The residue at position 1180 (P1180) is a 4-hydroxyproline. P1182 carries the 3-hydroxyproline modification. The residue at position 1183 (P1183) is a 4-hydroxyproline. P1185 is modified (3-hydroxyproline). P1186, P1189, and P1192 each carry 4-hydroxyproline. The nonhelical region (C-terminal) stretch occupies residues 1193 to 1218; the sequence is SAGFDFSFLPQPPQEKAHDGGRYYRA. Residue K1208 is modified to Allysine. The propeptide at 1219–1464 is C-terminal propeptide; it reads DDANVVRDRD…GFDVGPVCFL (246 aa). Positions 1229–1464 constitute a Fibrillar collagen NC1 domain; it reads LEVDTTLKSL…GFDVGPVCFL (236 aa). 3 disulfides stabilise this stretch: C1259-C1291, C1299-C1462, and C1370-C1415. Ca(2+) is bound by residues D1277, N1279, Q1280, C1282, and D1285. N-linked (GlcNAc...) asparagine glycosylation is present at N1365.

This sequence belongs to the fibrillar collagen family. Trimers of one alpha 2(I) and two alpha 1(I) chains. Interacts with MRC2. Interacts with TRAM2. Interacts with MFAP4 in a Ca (2+)-dependent manner. Post-translationally, contains mostly 4-hydroxyproline. Proline residues at the third position of the tripeptide repeating unit (G-X-Y) are hydroxylated in some or all of the chains. In terms of processing, contains 3-hydroxyproline at a few sites. This modification occurs on the first proline residue in the sequence motif Gly-Pro-Hyp, where Hyp is 4-hydroxyproline. Lysine residues at the third position of the tripeptide repeating unit (G-X-Y) are 5-hydroxylated in some or all of the chains. Post-translationally, O-glycosylated on hydroxylated lysine residues. The O-linked glycan consists of a Glc-Gal disaccharide. Forms the fibrils of tendon, ligaments and bones. In bones the fibrils are mineralized with calcium hydroxyapatite.

It is found in the secreted. The protein localises to the extracellular space. It localises to the extracellular matrix. Its function is as follows. Type I collagen is a member of group I collagen (fibrillar forming collagen). The protein is Collagen alpha-1(I) chain (COL1A1) of Homo sapiens (Human).